Reading from the N-terminus, the 203-residue chain is dITP/XTP pyrophosphatase (203 aa).

8–13 is a substrate binding site; sequence TANKGK. Positions 41 and 70 each coordinate Mg(2+). Catalysis depends on Asp70, which acts as the Proton acceptor. Substrate contacts are provided by residues Ser71, 153–156, Lys176, and 181–182; these read FGYD and HR.

The protein belongs to the HAM1 NTPase family. In terms of assembly, homodimer. Mg(2+) is required as a cofactor.

The enzyme catalyses XTP + H2O = XMP + diphosphate + H(+). The catalysed reaction is dITP + H2O = dIMP + diphosphate + H(+). It catalyses the reaction ITP + H2O = IMP + diphosphate + H(+). Functionally, pyrophosphatase that catalyzes the hydrolysis of nucleoside triphosphates to their monophosphate derivatives, with a high preference for the non-canonical purine nucleotides XTP (xanthosine triphosphate), dITP (deoxyinosine triphosphate) and ITP. Seems to function as a house-cleaning enzyme that removes non-canonical purine nucleotides from the nucleotide pool, thus preventing their incorporation into DNA/RNA and avoiding chromosomal lesions. The polypeptide is dITP/XTP pyrophosphatase (Listeria innocua serovar 6a (strain ATCC BAA-680 / CLIP 11262)).